Reading from the N-terminus, the 442-residue chain is Probable glycine dehydrogenase (decarboxylating) subunit 1 (442 aa).

It belongs to the GcvP family. N-terminal subunit subfamily. In terms of assembly, the glycine cleavage system is composed of four proteins: P, T, L and H. In this organism, the P 'protein' is a heterodimer of two subunits.

The catalysed reaction is N(6)-[(R)-lipoyl]-L-lysyl-[glycine-cleavage complex H protein] + glycine + H(+) = N(6)-[(R)-S(8)-aminomethyldihydrolipoyl]-L-lysyl-[glycine-cleavage complex H protein] + CO2. Functionally, the glycine cleavage system catalyzes the degradation of glycine. The P protein binds the alpha-amino group of glycine through its pyridoxal phosphate cofactor; CO(2) is released and the remaining methylamine moiety is then transferred to the lipoamide cofactor of the H protein. The chain is Probable glycine dehydrogenase (decarboxylating) subunit 1 from Phenylobacterium zucineum (strain HLK1).